Here is a 477-residue protein sequence, read N- to C-terminus: Glycogen synthase (477 aa).

Residue K15 participates in ADP-alpha-D-glucose binding.

It belongs to the glycosyltransferase 1 family. Bacterial/plant glycogen synthase subfamily.

The enzyme catalyses [(1-&gt;4)-alpha-D-glucosyl](n) + ADP-alpha-D-glucose = [(1-&gt;4)-alpha-D-glucosyl](n+1) + ADP + H(+). It participates in glycan biosynthesis; glycogen biosynthesis. Synthesizes alpha-1,4-glucan chains using ADP-glucose. This is Glycogen synthase from Shigella flexneri serotype 5b (strain 8401).